Consider the following 476-residue polypeptide: Glycogen synthase (476 aa).

Lys-15 lines the ADP-alpha-D-glucose pocket.

This sequence belongs to the glycosyltransferase 1 family. Bacterial/plant glycogen synthase subfamily.

The catalysed reaction is [(1-&gt;4)-alpha-D-glucosyl](n) + ADP-alpha-D-glucose = [(1-&gt;4)-alpha-D-glucosyl](n+1) + ADP + H(+). The protein operates within glycan biosynthesis; glycogen biosynthesis. In terms of biological role, synthesizes alpha-1,4-glucan chains using ADP-glucose. The sequence is that of Glycogen synthase from Streptococcus agalactiae serotype Ia (strain ATCC 27591 / A909 / CDC SS700).